Here is a 380-residue protein sequence, read N- to C-terminus: MSGPLRKHHPLLKVVNHSVIDLPVPSNISVMWNFGSLLGLCLVSQILTGLFLAMHYTADVNLAFSSVAHICRDVNYGWLLRNLHANGASFMFICLYMHIGRGLYYGSYFYVETWNIGVMLLVLTMATAFLGYVLPWGQMSFWGATVITNLFSAIPYFGPDLVQWLWGGFSVDNATLTRFFAFHFFLPFMIAGLSVVHLLFLHQTGANNPTGLAGDVDKVPFHAYFSYKDVVGFVVLLAGLVFIALFSPNLLTDPENYIPANPLVTPVHIQPEWYFLFAYAILRSIPNKLGGVVALAMSIVVLFFMPFVHSSRQTSHNFRPLAQVLFWLMVVNVLLLTWLGGQPVEYPYIFLGQAASVIYFVNILLFIPIVGYVENKLLFS.

4 consecutive transmembrane segments (helical) span residues 34–54 (FGSL…FLAM), 78–99 (WLLR…YMHI), 114–134 (WNIG…GYVL), and 179–199 (FFAF…VHLL). Positions 84 and 98 each coordinate heme b. 2 residues coordinate heme b: histidine 183 and histidine 197. Histidine 202 serves as a coordination point for a ubiquinone. Transmembrane regions (helical) follow at residues 227-247 (YKDV…ALFS), 289-309 (LGGV…PFVH), 321-341 (LAQV…WLGG), and 348-368 (YIFL…LFIP).

The protein belongs to the cytochrome b family. As to quaternary structure, the cytochrome bc1 complex contains 3 respiratory subunits (MT-CYB, CYC1 and UQCRFS1), 2 core proteins (UQCRC1 and UQCRC2) and probably 6 low-molecular weight proteins. Heme b is required as a cofactor.

It is found in the mitochondrion inner membrane. Its function is as follows. Component of the ubiquinol-cytochrome c reductase complex (complex III or cytochrome b-c1 complex) that is part of the mitochondrial respiratory chain. The b-c1 complex mediates electron transfer from ubiquinol to cytochrome c. Contributes to the generation of a proton gradient across the mitochondrial membrane that is then used for ATP synthesis. The polypeptide is Cytochrome b (MT-CYB) (Branchiostoma lanceolatum (Common lancelet)).